Here is a 763-residue protein sequence, read N- to C-terminus: Xaa-Pro dipeptidyl-peptidase (763 aa).

Residues Ser348, Asp468, and His498 each act as charge relay system in the active site.

This sequence belongs to the peptidase S15 family. In terms of assembly, homodimer.

The protein resides in the cytoplasm. The enzyme catalyses Hydrolyzes Xaa-Pro-|- bonds to release unblocked, N-terminal dipeptides from substrates including Ala-Pro-|-p-nitroanilide and (sequentially) Tyr-Pro-|-Phe-Pro-|-Gly-Pro-|-Ile.. Its function is as follows. Removes N-terminal dipeptides sequentially from polypeptides having unsubstituted N-termini provided that the penultimate residue is proline. The chain is Xaa-Pro dipeptidyl-peptidase (pepX) from Lactococcus lactis subsp. cremoris (Streptococcus cremoris).